The primary structure comprises 417 residues: D-amino acid dehydrogenase (417 aa).

3 to 17 (VVILGSGVVGVSTAW) contacts FAD.

This sequence belongs to the DadA oxidoreductase family. Requires FAD as cofactor.

It catalyses the reaction a D-alpha-amino acid + A + H2O = a 2-oxocarboxylate + AH2 + NH4(+). The protein operates within amino-acid degradation; D-alanine degradation; NH(3) and pyruvate from D-alanine: step 1/1. Oxidative deamination of D-amino acids. The sequence is that of D-amino acid dehydrogenase from Pectobacterium carotovorum subsp. carotovorum (strain PC1).